The primary structure comprises 120 residues: Large ribosomal subunit protein bL19 (120 aa).

Belongs to the bacterial ribosomal protein bL19 family.

Its function is as follows. This protein is located at the 30S-50S ribosomal subunit interface and may play a role in the structure and function of the aminoacyl-tRNA binding site. The sequence is that of Large ribosomal subunit protein bL19 from Chlorobium luteolum (strain DSM 273 / BCRC 81028 / 2530) (Pelodictyon luteolum).